The following is a 247-amino-acid chain: Adenosylcobinamide-GDP ribazoletransferase (247 aa).

5 consecutive transmembrane segments (helical) span residues 34–54 (IITF…VFMV), 57–77 (AWCG…LMTG), 113–133 (GGLA…ELAL), 138–158 (ILAS…LLMY), and 194–214 (VLLL…AIFI).

This sequence belongs to the CobS family. Requires Mg(2+) as cofactor.

It localises to the cell inner membrane. It catalyses the reaction alpha-ribazole + adenosylcob(III)inamide-GDP = adenosylcob(III)alamin + GMP + H(+). The enzyme catalyses alpha-ribazole 5'-phosphate + adenosylcob(III)inamide-GDP = adenosylcob(III)alamin 5'-phosphate + GMP + H(+). The protein operates within cofactor biosynthesis; adenosylcobalamin biosynthesis; adenosylcobalamin from cob(II)yrinate a,c-diamide: step 7/7. Functionally, joins adenosylcobinamide-GDP and alpha-ribazole to generate adenosylcobalamin (Ado-cobalamin). Also synthesizes adenosylcobalamin 5'-phosphate from adenosylcobinamide-GDP and alpha-ribazole 5'-phosphate. The chain is Adenosylcobinamide-GDP ribazoletransferase from Shigella flexneri.